The chain runs to 100 residues: Large ribosomal subunit protein bL21 (100 aa).

It belongs to the bacterial ribosomal protein bL21 family. Part of the 50S ribosomal subunit. Contacts protein L20.

This protein binds to 23S rRNA in the presence of protein L20. In Mycoplasma genitalium (strain ATCC 33530 / DSM 19775 / NCTC 10195 / G37) (Mycoplasmoides genitalium), this protein is Large ribosomal subunit protein bL21.